The primary structure comprises 586 residues: Glutathione hydrolase 5 proenzyme (586 aa).

Residues 1 to 8 (MARGYGAT) lie on the Cytoplasmic side of the membrane. The chain crosses the membrane as a helical; Signal-anchor for type II membrane protein span at residues 9 to 29 (VSLVLLGLGLALAVIVLAVVL). Over 30–586 (SRHQAPCGPQ…LRKSGEAAGY (557 aa)) the chain is Extracellular. N-linked (GlcNAc...) asparagine glycosylation occurs at Asn98. Residue Arg110 participates in L-glutamate binding. 3 N-linked (GlcNAc...) asparagine glycosylation sites follow: Asn204, Asn303, and Asn347. The active-site Nucleophile is Thr388. L-glutamate is bound by residues Thr406, Glu427, and 469–470 (SS). 2 N-linked (GlcNAc...) asparagine glycosylation sites follow: Asn535 and Asn550.

Belongs to the gamma-glutamyltransferase family. In terms of assembly, heterodimer composed of the light and heavy chains. The active site is located in the light chain. Cleaved by autocatalysis into a large and a small subunit. Post-translationally, glycosylated. Expressed in follicular dendritic cells in lymphoid follicles (at protein level).

The protein resides in the membrane. The enzyme catalyses glutathione + H2O = L-cysteinylglycine + L-glutamate. The catalysed reaction is an S-substituted glutathione + H2O = an S-substituted L-cysteinylglycine + L-glutamate. It carries out the reaction leukotriene C4 + H2O = leukotriene D4 + L-glutamate. It catalyses the reaction S-[(2E,6E,10E)-geranylgeranyl]-L-glutathione + H2O = S-[(2E,6E,10E)-geranylgeranyl]-L-cysteinylglycine + L-glutamate. The enzyme catalyses an N-terminal (5-L-glutamyl)-[peptide] + an alpha-amino acid = 5-L-glutamyl amino acid + an N-terminal L-alpha-aminoacyl-[peptide]. It functions in the pathway sulfur metabolism; glutathione metabolism. The protein operates within lipid metabolism; leukotriene D4 biosynthesis. Inhibited by serine-borate. In terms of biological role, cleaves the gamma-glutamyl bond of extracellular glutathione tripeptide (gamma-Glu-Cys-Gly) and certain glutathione conjugates. Hydrolyzes glutathione releasing L-Glu and Cys-Gly dipeptide which is further metabolized to maintain extracellular cysteine levels but also to provide cysteine necessary for intracellular glutathione synthesis. Among glutathione-S-conjugates metabolizes leukotriene C4 (LTC4) and S-geranylgeranyl-glutathione (GGG), but is inactive toward gamma-glutamyl leucine. Converts extracellular LTC4 to LTD4 during acute inflammatory response. Acts as a negative regulator of GGG bioactivity. GGT5 (via GGG catabolism) and ABCC1 (via extracellular transport) establish GGG gradients within lymphoid tissues to position P2RY8-positive lymphocytes at germinal centers in lymphoid follicles and restrict their chemotactic transmigration from blood vessels to bone marrow parenchyma. The transpeptidation reaction, i.e. the transfer of gamma-glutamyl moiety to an acceptor molecule to yield a new gamma-glutamyl compound requires high concentration of dipeptide acceptor and is considered nonphysiological. This Homo sapiens (Human) protein is Glutathione hydrolase 5 proenzyme (GGT5).